The primary structure comprises 139 residues: Centromere protein S (139 aa).

Positions 99–139 (ELASSNMEQKEKKKKKSSAAKGRKTEENETPVTESEDSNMA) are disordered. The segment covering 110–120 (KKKKKSSAAKG) has biased composition (basic residues).

The protein belongs to the TAF9 family. CENP-S/MHF1 subfamily. As to quaternary structure, heterodimer with CENPX, sometimes called MHF; this interaction stabilizes both partners. MHF heterodimers can assemble to form tetrameric structures. MHF also coassemble with CENPT-CENPW heterodimers at centromeres to form the tetrameric CENP-T-W-S-X complex. Forms a discrete complex with FANCM and CENPX, called FANCM-MHF; this interaction, probably mediated by direct binding between CENPS and FANCM, leads to synergistic activation of double-stranded DNA binding and strongly stimulates FANCM-mediated DNA remodeling. Recruited by FANCM to the Fanconi anemia (FA) core complex, which consists of CENPS, CENPX, FANCA, FANCB, FANCC, FANCE, FANCF, FANCG, FANCL, FANCM, FAAP24 and FAAP100. The FA core complex associates with Bloom syndrome (BLM) complex, which consists of at least BLM, DNA topoisomerase 3-alpha (TOP3A), RMI1/BLAP75, RPA1/RPA70 and RPA2/RPA32. The super complex between FA and BLM is called BRAFT. Component of the CENPA-CAD complex, composed of CENPI, CENPK, CENPL, CENPO, CENPP, CENPQ, CENPR and CENPS. The CENPA-CAD complex is probably recruited on centromeres by the CENPA-NAC complex, at least composed of CENPA, CENPC, CENPH, CENPM, CENPN, CENPT and CENPU.

It is found in the nucleus. It localises to the chromosome. The protein resides in the centromere. Its subcellular location is the kinetochore. Functionally, DNA-binding component of the Fanconi anemia (FA) core complex. Required for the normal activation of the FA pathway, leading to monoubiquitination of the FANCI-FANCD2 complex in response to DNA damage, cellular resistance to DNA cross-linking drugs, and prevention of chromosomal breakage. In complex with CENPX (MHF heterodimer), crucial cofactor for FANCM in both binding and ATP-dependent remodeling of DNA. Stabilizes FANCM. In complex with CENPX and FANCM (but not other FANC proteins), rapidly recruited to blocked forks and promotes gene conversion at blocked replication forks. In complex with CENPT, CENPW and CENPX (CENP-T-W-S-X heterotetramer), involved in the formation of a functional kinetochore outer plate, which is essential for kinetochore-microtubule attachment and faithful mitotic progression. As a component of MHF and CENP-T-W-S-X complexes, binds DNA and bends it to form a nucleosome-like structure. DNA-binding function is fulfilled in the presence of CENPX, with the following preference for DNA substates: Holliday junction &gt; double-stranded &gt; splay arm &gt; single-stranded. Does not bind DNA on its own. The protein is Centromere protein S (CENPS) of Gallus gallus (Chicken).